Consider the following 574-residue polypeptide: Methionine--tRNA ligase (574 aa).

Residues 11 to 21 (PYINGIKHLGN) carry the 'HIGH' region motif. The Zn(2+) site is built by cysteine 143, cysteine 146, cysteine 156, and cysteine 159. Residues 345–349 (KFSTS) carry the 'KMSKS' region motif. Threonine 348 contributes to the ATP binding site.

This sequence belongs to the class-I aminoacyl-tRNA synthetase family. MetG type 1 subfamily. Monomer. Requires Zn(2+) as cofactor.

It localises to the cytoplasm. It carries out the reaction tRNA(Met) + L-methionine + ATP = L-methionyl-tRNA(Met) + AMP + diphosphate. Is required not only for elongation of protein synthesis but also for the initiation of all mRNA translation through initiator tRNA(fMet) aminoacylation. The sequence is that of Methionine--tRNA ligase from Streptomyces avermitilis (strain ATCC 31267 / DSM 46492 / JCM 5070 / NBRC 14893 / NCIMB 12804 / NRRL 8165 / MA-4680).